A 209-amino-acid polypeptide reads, in one-letter code: Uridine kinase (209 aa).

12–19 (GGSASGKT) is an ATP binding site.

This sequence belongs to the uridine kinase family.

The protein resides in the cytoplasm. The enzyme catalyses uridine + ATP = UMP + ADP + H(+). It carries out the reaction cytidine + ATP = CMP + ADP + H(+). Its pathway is pyrimidine metabolism; CTP biosynthesis via salvage pathway; CTP from cytidine: step 1/3. It participates in pyrimidine metabolism; UMP biosynthesis via salvage pathway; UMP from uridine: step 1/1. This Chloroflexus aggregans (strain MD-66 / DSM 9485) protein is Uridine kinase.